We begin with the raw amino-acid sequence, 348 residues long: Erythronate-4-phosphate dehydrogenase (348 aa).

Residues T46 and T67 each contribute to the substrate site. D147 contributes to the NAD(+) binding site. Residue R209 is part of the active site. D233 is an NAD(+) binding site. E238 is an active-site residue. H255 serves as the catalytic Proton donor. G258 is a binding site for NAD(+). Position 259 (Y259) interacts with substrate.

Belongs to the D-isomer specific 2-hydroxyacid dehydrogenase family. PdxB subfamily. In terms of assembly, homodimer.

Its subcellular location is the cytoplasm. The catalysed reaction is 4-phospho-D-erythronate + NAD(+) = (R)-3-hydroxy-2-oxo-4-phosphooxybutanoate + NADH + H(+). The protein operates within cofactor biosynthesis; pyridoxine 5'-phosphate biosynthesis; pyridoxine 5'-phosphate from D-erythrose 4-phosphate: step 2/5. In terms of biological role, catalyzes the oxidation of erythronate-4-phosphate to 3-hydroxy-2-oxo-4-phosphonooxybutanoate. This Bacteroides fragilis (strain YCH46) protein is Erythronate-4-phosphate dehydrogenase.